The sequence spans 631 residues: Phosphomethylpyrimidine synthase (631 aa).

Substrate-binding positions include asparagine 239, methionine 268, tyrosine 297, histidine 333, 353 to 355 (SRG), 394 to 397 (DGLR), and glutamate 433. Histidine 437 lines the Zn(2+) pocket. Position 460 (tyrosine 460) interacts with substrate. Position 501 (histidine 501) interacts with Zn(2+). 3 residues coordinate [4Fe-4S] cluster: cysteine 581, cysteine 584, and cysteine 589.

The protein belongs to the ThiC family. In terms of assembly, homodimer. [4Fe-4S] cluster serves as cofactor.

It catalyses the reaction 5-amino-1-(5-phospho-beta-D-ribosyl)imidazole + S-adenosyl-L-methionine = 4-amino-2-methyl-5-(phosphooxymethyl)pyrimidine + CO + 5'-deoxyadenosine + formate + L-methionine + 3 H(+). The protein operates within cofactor biosynthesis; thiamine diphosphate biosynthesis. Catalyzes the synthesis of the hydroxymethylpyrimidine phosphate (HMP-P) moiety of thiamine from aminoimidazole ribotide (AIR) in a radical S-adenosyl-L-methionine (SAM)-dependent reaction. The polypeptide is Phosphomethylpyrimidine synthase (Escherichia coli O81 (strain ED1a)).